A 448-amino-acid chain; its full sequence is Glutamyl-tRNA reductase (448 aa).

Substrate-binding positions include 49–52 (TCNR), Ser-109, 114–116 (ETQ), and Gln-120. Cys-50 (nucleophile) is an active-site residue. Residue 189-194 (GAGEMS) participates in NADP(+) binding.

The protein belongs to the glutamyl-tRNA reductase family. In terms of assembly, homodimer.

The catalysed reaction is (S)-4-amino-5-oxopentanoate + tRNA(Glu) + NADP(+) = L-glutamyl-tRNA(Glu) + NADPH + H(+). It functions in the pathway porphyrin-containing compound metabolism; protoporphyrin-IX biosynthesis; 5-aminolevulinate from L-glutamyl-tRNA(Glu): step 1/2. In terms of biological role, catalyzes the NADPH-dependent reduction of glutamyl-tRNA(Glu) to glutamate 1-semialdehyde (GSA). This chain is Glutamyl-tRNA reductase, found in Staphylococcus aureus (strain bovine RF122 / ET3-1).